The chain runs to 437 residues: Adenylosuccinate synthetase (437 aa).

GTP-binding positions include 12–18 (GDEGKGK) and 40–42 (GHT). The active-site Proton acceptor is the Asp13. Positions 13 and 40 each coordinate Mg(2+). IMP contacts are provided by residues 13-16 (DEGK), 38-41 (NAGH), Thr128, Arg142, Gln223, Thr238, and Arg302. His41 serves as the catalytic Proton donor. Residue 298–304 (TTTGRRR) participates in substrate binding. GTP-binding positions include Arg304, 330 to 332 (KLD), and 412 to 414 (SLG).

Belongs to the adenylosuccinate synthetase family. In terms of assembly, homodimer. Mg(2+) serves as cofactor.

It localises to the cytoplasm. The catalysed reaction is IMP + L-aspartate + GTP = N(6)-(1,2-dicarboxyethyl)-AMP + GDP + phosphate + 2 H(+). It functions in the pathway purine metabolism; AMP biosynthesis via de novo pathway; AMP from IMP: step 1/2. Its function is as follows. Plays an important role in the de novo pathway of purine nucleotide biosynthesis. Catalyzes the first committed step in the biosynthesis of AMP from IMP. In Parasynechococcus marenigrum (strain WH8102), this protein is Adenylosuccinate synthetase.